The sequence spans 262 residues: Hydroxyethylthiazole kinase (262 aa).

Position 43 (M43) interacts with substrate. 2 residues coordinate ATP: R118 and T164. Residue A191 participates in substrate binding.

The protein belongs to the Thz kinase family. Mg(2+) serves as cofactor.

The enzyme catalyses 5-(2-hydroxyethyl)-4-methylthiazole + ATP = 4-methyl-5-(2-phosphooxyethyl)-thiazole + ADP + H(+). The protein operates within cofactor biosynthesis; thiamine diphosphate biosynthesis; 4-methyl-5-(2-phosphoethyl)-thiazole from 5-(2-hydroxyethyl)-4-methylthiazole: step 1/1. In terms of biological role, catalyzes the phosphorylation of the hydroxyl group of 4-methyl-5-beta-hydroxyethylthiazole (THZ). This is Hydroxyethylthiazole kinase from Cereibacter sphaeroides (strain ATCC 17029 / ATH 2.4.9) (Rhodobacter sphaeroides).